Here is a 210-residue protein sequence, read N- to C-terminus: FMN-dependent NADH:quinone oxidoreductase (210 aa).

Residues Ser-9 and Ser-15 to Ser-17 each bind FMN.

Belongs to the azoreductase type 1 family. In terms of assembly, homodimer. The cofactor is FMN.

It catalyses the reaction 2 a quinone + NADH + H(+) = 2 a 1,4-benzosemiquinone + NAD(+). It carries out the reaction N,N-dimethyl-1,4-phenylenediamine + anthranilate + 2 NAD(+) = 2-(4-dimethylaminophenyl)diazenylbenzoate + 2 NADH + 2 H(+). Functionally, quinone reductase that provides resistance to thiol-specific stress caused by electrophilic quinones. In terms of biological role, also exhibits azoreductase activity. Catalyzes the reductive cleavage of the azo bond in aromatic azo compounds to the corresponding amines. This is FMN-dependent NADH:quinone oxidoreductase from Mesorhizobium japonicum (strain LMG 29417 / CECT 9101 / MAFF 303099) (Mesorhizobium loti (strain MAFF 303099)).